The sequence spans 106 residues: Large ribosomal subunit protein uL22 (106 aa).

Belongs to the universal ribosomal protein uL22 family. As to quaternary structure, part of the 50S ribosomal subunit.

This protein binds specifically to 23S rRNA; its binding is stimulated by other ribosomal proteins, e.g. L4, L17, and L20. It is important during the early stages of 50S assembly. It makes multiple contacts with different domains of the 23S rRNA in the assembled 50S subunit and ribosome. Its function is as follows. The globular domain of the protein is located near the polypeptide exit tunnel on the outside of the subunit, while an extended beta-hairpin is found that lines the wall of the exit tunnel in the center of the 70S ribosome. This is Large ribosomal subunit protein uL22 from Nautilia profundicola (strain ATCC BAA-1463 / DSM 18972 / AmH).